A 413-amino-acid polypeptide reads, in one-letter code: Protein arginine N-methyltransferase 2 (413 aa).

The tract at residues 148-187 (LDGSDTEMGDKGGSARDVPASADSAPADSAGHSSSEPTAV) is disordered. Low complexity predominate over residues 162 to 182 (ARDVPASADSAPADSAGHSSS). Residues 192-413 (TAAHQDTYLQ…HYYHPEISFQ (222 aa)) form the RMT2 domain. S-adenosyl-L-methionine contacts are provided by residues Y199, M229, 252 to 257 (FGMGII), 273 to 275 (EAH), 300 to 301 (WQ), and D321.

Belongs to the class I-like SAM-binding methyltransferase superfamily. RMT2 methyltransferase family. As to quaternary structure, monomer.

The protein resides in the cytoplasm. It is found in the nucleus. In terms of biological role, S-adenosyl-L-methionine-dependent protein-arginine N-methyltransferase that methylates the delta-nitrogen atom of arginine residues to form N5-methylarginine (type IV) in target proteins. Monomethylates ribosomal protein L12. The sequence is that of Protein arginine N-methyltransferase 2 from Eremothecium gossypii (strain ATCC 10895 / CBS 109.51 / FGSC 9923 / NRRL Y-1056) (Yeast).